We begin with the raw amino-acid sequence, 718 residues long: Ribosomal RNA large subunit methyltransferase K/L (718 aa).

One can recognise a THUMP domain in the interval 43 to 154; the sequence is TQYRILLWSR…QDELVVSLDL (112 aa).

The protein belongs to the methyltransferase superfamily. RlmKL family.

The protein localises to the cytoplasm. The catalysed reaction is guanosine(2445) in 23S rRNA + S-adenosyl-L-methionine = N(2)-methylguanosine(2445) in 23S rRNA + S-adenosyl-L-homocysteine + H(+). The enzyme catalyses guanosine(2069) in 23S rRNA + S-adenosyl-L-methionine = N(2)-methylguanosine(2069) in 23S rRNA + S-adenosyl-L-homocysteine + H(+). Its function is as follows. Specifically methylates the guanine in position 2445 (m2G2445) and the guanine in position 2069 (m7G2069) of 23S rRNA. The protein is Ribosomal RNA large subunit methyltransferase K/L of Histophilus somni (strain 129Pt) (Haemophilus somnus).